Here is a 475-residue protein sequence, read N- to C-terminus: Ras-GEF domain-containing family member 1B-B (475 aa).

The segment covering 1 to 19 (MPQTTPYSSKFNPSAYSSS) has biased composition (polar residues). Positions 1-25 (MPQTTPYSSKFNPSAYSSSHSHRQP) are disordered. Residues 36–166 (RDNKLVSGSL…LIQRLLRKLT (131 aa)) enclose the N-terminal Ras-GEF domain. In terms of domain architecture, Ras-GEF spans 209-456 (DPFIFAQQLT…QLASYESEGP (248 aa)). Residues 452 to 475 (ESEGPENNLERDTRRSLRSSLSRM) are disordered.

In terms of biological role, guanine nucleotide exchange factor (GEF) for Ras family proteins. The chain is Ras-GEF domain-containing family member 1B-B from Danio rerio (Zebrafish).